We begin with the raw amino-acid sequence, 483 residues long: MEYIEGNTGKWEYVIGLEIHAQISSKTKLFSGSSTLFAASPNSQVSYVDAAMPGMLPVLNKHCVHQAIKTGLALKAKINKYSVFDRKNYFYADLPQGYQISQFYYPIVQDGMIEIQTSTGNLKTIRINRLHLEQDAGKSIHDQSPYYSMIDLNRAGIGLMEIVTEPDISSPEEAAEFVKKLRNLLRYIGSCDGDMEKGSLRCDANISVRRSGEALGTRCEIKNINSIRNIIKAIEFEAKRQVDLLESGEAIIQETRLFNVDSCETKTMRLKEEALDYRYFPDPDLLPLVIHDELINELKSSLPELPDQKIEKYTKKFGLSKYDAGIIVSDESIAEYFEKAANECNPKMLTNWLITELFGQLNKASIGISECKITPSDFAKLIKLIENNTISGKIAKTVFEIMFATGKAPDKIVEEKGLVQISDNKILNTVIDEVIAENSKSVKCYKSGKDKLFGFFVGQVMKKTKCKANPTLVNKLLKEKLDS.

The protein belongs to the GatB/GatE family. GatB subfamily. In terms of assembly, heterotrimer of A, B and C subunits.

It carries out the reaction L-glutamyl-tRNA(Gln) + L-glutamine + ATP + H2O = L-glutaminyl-tRNA(Gln) + L-glutamate + ADP + phosphate + H(+). The catalysed reaction is L-aspartyl-tRNA(Asn) + L-glutamine + ATP + H2O = L-asparaginyl-tRNA(Asn) + L-glutamate + ADP + phosphate + 2 H(+). Functionally, allows the formation of correctly charged Asn-tRNA(Asn) or Gln-tRNA(Gln) through the transamidation of misacylated Asp-tRNA(Asn) or Glu-tRNA(Gln) in organisms which lack either or both of asparaginyl-tRNA or glutaminyl-tRNA synthetases. The reaction takes place in the presence of glutamine and ATP through an activated phospho-Asp-tRNA(Asn) or phospho-Glu-tRNA(Gln). In Rickettsia typhi (strain ATCC VR-144 / Wilmington), this protein is Aspartyl/glutamyl-tRNA(Asn/Gln) amidotransferase subunit B.